A 680-amino-acid chain; its full sequence is WD repeat-containing protein 48 homolog (680 aa).

WD repeat units lie at residues 26–65 (QHRN…SEKY), 71–110 (HHND…CMST), 113–152 (THRD…ALTA), 164–203 (GSKD…RSMK), 206–245 (GHTE…CVQT), 248–287 (VHKE…NKTL), 290–329 (EEQA…RCTM), and 350–389 (KGGA…KKEQ). A disordered region spans residues 592–616 (ETTPSGGNANNSLQNSQSDANSEGS).

It belongs to the WD repeat WDR48 family. As to quaternary structure, catalytic component of the Usp12-46 deubiquitylase complex consisting of Usp12-46, Wdr20 and Uaf1; regulatory subunit that, together wtih Wdr20, stabilizes Usp12-46. The Usp12-46 deubiquitylase complex associates with arr/arrow; the interaction leads to deubiquitination and stabilization of arr/arrow.

Functionally, regulatory component of the Usp12-46 deubiquitylase complex. activates deubiquitination by increasing the catalytic turnover without increasing the affinity of deubiquitinating enzymes for the substrate. The complex deubiquitylates the wg/wingless-signaling receptor arr/arrow, which stabilizes the receptor and increases its concentration at the cell surface; this enhances the sensitivity of cells to wg/wingless-signal stimulation. This increases the amplitude and spatial range of the signaling response to the wg/wingless morphogen gradient, facilitating the precise concentration-dependent regulation of its target genes. Together with Wdr20 and Usp12-46 required for wg/wingless-mediated signaling in the wing imaginal disc and for wg/wingless-dependent regulation of intestinal stem cell proliferation. In Drosophila yakuba (Fruit fly), this protein is WD repeat-containing protein 48 homolog.